Reading from the N-terminus, the 600-residue chain is MSTAIYYSTHNNMHTNDDITNGSGSTTSGNPGANPSNPNHTNAGATINNNSNIGLNSANKNHTTLLPSLAHIMPSNSNNTTNSGSSIDISSTLINPYSSGAAAAAAAVGGGNGGYYHPPPPHSQQQQQQQFDTSYSNQTTPTSAYTNFNNDSTHSPTDISMQQNMNNLASSSGNMSIGGGIDGNFSHNNNNNNNNNNNNNNKCICKSKVNKIPRPRNAFILFRQKYHQMVLDEGTVIRTNPEVSRELGRRWRGLSPQEKEHWNNLAEEEKKNHAKKYPGYRYTPRRNGRNKNCPVCKNKPLPNNKSNSISGMSGSGGGGGSISGASSLSGGLTSRDNSITNANAIDYQQQQLQQQQQQQQQQAIQFQSLPPDQYQQLIKQQQQQLQLQAQLNGGGGGGGITSNPQTIPQYITNGNYPSYIISPNPYSTTSTTAPTTTTTTTTNASSIGLSVPPTATTTSTSSQPTSANSQLHFYEAEKLSPVSSTHHQSSISEIAAQQQQQQQQQQFMYNTNYSTIPPNNTTTMQQHSAGTGNDYSLNGNNSGNTGYDNRYGYGQPMIITGQSQQGLQVQQQGQHYNSGLHAAQHYQQQQQQHHQQQPPQ.

Residues 1–14 (MSTAIYYSTHNNMH) show a composition bias toward polar residues. 6 disordered regions span residues 1–59 (MSTA…NSAN), 112–160 (NGGY…TDIS), 180–200 (GIDG…NNNN), 266–337 (AEEE…SRDN), 427–549 (STTS…GYDN), and 564–600 (QQGL…QPPQ). Composition is skewed to low complexity over residues 20-39 (TNGS…SNPN) and 47-59 (INNN…NSAN). Polar residues predominate over residues 131–160 (FDTSYSNQTTPTSAYTNFNNDSTHSPTDIS). Residues 188 to 200 (NNNNNNNNNNNNN) are compositionally biased toward low complexity. Residues 212 to 281 (IPRPRNAFIL…NHAKKYPGYR (70 aa)) constitute a DNA-binding region (HMG box). A compositionally biased stretch (basic residues) spans 272–289 (NHAKKYPGYRYTPRRNGR). Low complexity predominate over residues 297 to 312 (KNKPLPNNKSNSISGM). Gly residues predominate over residues 313–322 (SGSGGGGGSI). Low complexity predominate over residues 427-470 (STTSTTAPTTTTTTTTNASSIGLSVPPTATTTSTSSQPTSANSQ). Residues 481–496 (PVSSTHHQSSISEIAA) show a composition bias toward polar residues. Over residues 497-506 (QQQQQQQQQQ) the composition is skewed to low complexity. A compositionally biased stretch (polar residues) spans 507 to 547 (FMYNTNYSTIPPNNTTTMQQHSAGTGNDYSLNGNNSGNTGY). Composition is skewed to low complexity over residues 564–574 (QQGLQVQQQGQ) and 581–600 (HAAQ…QPPQ).

It is found in the nucleus. Transcription regulator that functions in both the positive and negative regulation of filamentous growth, depending upon the environmental conditions. Recruits the TUP1/SSN6 general repression complex to achieve repression. Regulates genes encoding cell wall components that are specifically expressed in the filamentous forms such as HWP1, RBT1, HYR1, ECE1, ALS1, RBT4 and RBT5. The sequence is that of Repressor of filamentous growth 1 (RFG1) from Candida albicans (strain SC5314 / ATCC MYA-2876) (Yeast).